We begin with the raw amino-acid sequence, 905 residues long: Alanine--tRNA ligase (905 aa).

The Zn(2+) site is built by His-569, His-573, Cys-693, and His-697.

It belongs to the class-II aminoacyl-tRNA synthetase family. Requires Zn(2+) as cofactor.

Its subcellular location is the cytoplasm. The catalysed reaction is tRNA(Ala) + L-alanine + ATP = L-alanyl-tRNA(Ala) + AMP + diphosphate. Its function is as follows. Catalyzes the attachment of alanine to tRNA(Ala) in a two-step reaction: alanine is first activated by ATP to form Ala-AMP and then transferred to the acceptor end of tRNA(Ala). Also edits incorrectly charged Ser-tRNA(Ala) and Gly-tRNA(Ala) via its editing domain. The sequence is that of Alanine--tRNA ligase from Roseiflexus sp. (strain RS-1).